The sequence spans 272 residues: Type III pantothenate kinase (272 aa).

6–13 contributes to the ATP binding site; that stretch reads DVRNTHTV. 109 to 112 is a substrate binding site; the sequence is GADR. Asp-111 (proton acceptor) is an active-site residue. Asp-131 contributes to the K(+) binding site. Ser-134 contributes to the ATP binding site. Thr-186 serves as a coordination point for substrate.

The protein belongs to the type III pantothenate kinase family. Homodimer. It depends on NH4(+) as a cofactor. Requires K(+) as cofactor.

Its subcellular location is the cytoplasm. The catalysed reaction is (R)-pantothenate + ATP = (R)-4'-phosphopantothenate + ADP + H(+). It participates in cofactor biosynthesis; coenzyme A biosynthesis; CoA from (R)-pantothenate: step 1/5. Its function is as follows. Catalyzes the phosphorylation of pantothenate (Pan), the first step in CoA biosynthesis. The chain is Type III pantothenate kinase from Mycobacterium ulcerans (strain Agy99).